The chain runs to 262 residues: Cyclin-dependent kinase inhibitor 1 (262 aa).

Residues 140 to 212 (SDVAEAGSEH…SAQQATRPKI (73 aa)) are disordered. Positions 160-169 (SGRDRERRET) are enriched in basic and acidic residues. Low complexity predominate over residues 198–208 (SAATASAQQAT).

The protein belongs to the CDI family. ICK/KRP subfamily. In terms of tissue distribution, expressed in roots, stems, leaves and apex.

Its function is as follows. Regulates the production of endosperm cells, affecting seed filling and embryo development. Regulates endoreduplication of endosperm cells. May play a role in the exit from the mitotic cell cycle during rice grain formation. Inhibitis leaf elongation rates by decreasing cell number, that is partly compensated by increased cell size. May not affect growth rate or cell size of the primary root. The protein is Cyclin-dependent kinase inhibitor 1 (KRP1) of Oryza sativa subsp. japonica (Rice).